Consider the following 127-residue polypeptide: Large ribosomal subunit protein bL17 (127 aa).

Belongs to the bacterial ribosomal protein bL17 family. In terms of assembly, part of the 50S ribosomal subunit. Contacts protein L32.

This is Large ribosomal subunit protein bL17 from Actinobacillus pleuropneumoniae serotype 7 (strain AP76).